A 316-amino-acid polypeptide reads, in one-letter code: Ribonuclease Z (316 aa).

Zn(2+) contacts are provided by H59, H61, D63, H64, H135, D203, and H261. D63 functions as the Proton acceptor in the catalytic mechanism.

This sequence belongs to the RNase Z family. In terms of assembly, homodimer. Zn(2+) is required as a cofactor.

It carries out the reaction Endonucleolytic cleavage of RNA, removing extra 3' nucleotides from tRNA precursor, generating 3' termini of tRNAs. A 3'-hydroxy group is left at the tRNA terminus and a 5'-phosphoryl group is left at the trailer molecule.. Zinc phosphodiesterase, which displays some tRNA 3'-processing endonuclease activity. Probably involved in tRNA maturation, by removing a 3'-trailer from precursor tRNA. This chain is Ribonuclease Z, found in Nanoarchaeum equitans (strain Kin4-M).